A 363-amino-acid polypeptide reads, in one-letter code: Ribosomal RNA large subunit methyltransferase M (363 aa).

Residues serine 190, 223-226 (CPGG), aspartate 242, aspartate 262, and aspartate 279 contribute to the S-adenosyl-L-methionine site. Residue lysine 308 is the Proton acceptor of the active site.

Belongs to the class I-like SAM-binding methyltransferase superfamily. RNA methyltransferase RlmE family. RlmM subfamily. In terms of assembly, monomer.

Its subcellular location is the cytoplasm. The catalysed reaction is cytidine(2498) in 23S rRNA + S-adenosyl-L-methionine = 2'-O-methylcytidine(2498) in 23S rRNA + S-adenosyl-L-homocysteine + H(+). Catalyzes the 2'-O-methylation at nucleotide C2498 in 23S rRNA. The protein is Ribosomal RNA large subunit methyltransferase M of Vibrio atlanticus (strain LGP32) (Vibrio splendidus (strain Mel32)).